The chain runs to 436 residues: Transcription termination factor Rho (436 aa).

In terms of domain architecture, Rho RNA-BD spans 65-140 (LVFVKGVLEI…IRMESVNGLP (76 aa)). ATP is bound by residues 185-190 (GKGQRG), 197-202 (KAGKTV), and Arg-228.

The protein belongs to the Rho family. Homohexamer. The homohexamer assembles into an open ring structure.

Its function is as follows. Facilitates transcription termination by a mechanism that involves Rho binding to the nascent RNA, activation of Rho's RNA-dependent ATPase activity, and release of the mRNA from the DNA template. The polypeptide is Transcription termination factor Rho (Aquifex aeolicus (strain VF5)).